The primary structure comprises 78 residues: Probable [Fe-S]-dependent transcriptional repressor (78 aa).

4 residues coordinate iron-sulfur cluster: Cys-56, Cys-61, Cys-64, and Cys-70.

The protein belongs to the FeoC family.

In terms of biological role, may function as a transcriptional regulator that controls feoABC expression. In Cronobacter sakazakii (strain ATCC BAA-894) (Enterobacter sakazakii), this protein is Probable [Fe-S]-dependent transcriptional repressor.